The primary structure comprises 370 residues: MNPKPEADRKLSVVVAGGGTAGHIEPAMAVAEAVRAQRPDARITALGTTRGLETTLVPARGFDLQLIPPVPVPRKLNKDLATLPLRLRKALKETKRVLREVEADVVIGFGGYVSAPAYLAARSLKIPFFVHEANARAGVANKLGVKLGGTGLAAVEDSGLEAEIVGIPVRESVLQLDRKALRAEAREFFGVDPEAPLLLVTGGSQGARSINNAVVDAAKTLQDAGIGVLHAYGKKNDIELPAEVQEGKPRYVAVPYIERMDLALAAADAILCRSGAMTVAEVSAVGLPGIYVPLPHGNGEQELNVRPITHAGGGVIIKDAELTGHRVSQEVIPLLRDETRWQAASLATLAAGHRDAAEKIAEKIIAAADA.

UDP-N-acetyl-alpha-D-glucosamine is bound by residues 20–22, N134, R170, S204, I257, and Q301; that span reads TAG.

The protein belongs to the glycosyltransferase 28 family. MurG subfamily.

It is found in the cell membrane. The catalysed reaction is di-trans,octa-cis-undecaprenyl diphospho-N-acetyl-alpha-D-muramoyl-L-alanyl-D-glutamyl-meso-2,6-diaminopimeloyl-D-alanyl-D-alanine + UDP-N-acetyl-alpha-D-glucosamine = di-trans,octa-cis-undecaprenyl diphospho-[N-acetyl-alpha-D-glucosaminyl-(1-&gt;4)]-N-acetyl-alpha-D-muramoyl-L-alanyl-D-glutamyl-meso-2,6-diaminopimeloyl-D-alanyl-D-alanine + UDP + H(+). Its pathway is cell wall biogenesis; peptidoglycan biosynthesis. Its function is as follows. Cell wall formation. Catalyzes the transfer of a GlcNAc subunit on undecaprenyl-pyrophosphoryl-MurNAc-pentapeptide (lipid intermediate I) to form undecaprenyl-pyrophosphoryl-MurNAc-(pentapeptide)GlcNAc (lipid intermediate II). This chain is UDP-N-acetylglucosamine--N-acetylmuramyl-(pentapeptide) pyrophosphoryl-undecaprenol N-acetylglucosamine transferase, found in Corynebacterium jeikeium (strain K411).